The sequence spans 485 residues: Probable alginate O-acetylase AlgI (485 aa).

A run of 9 helical transmembrane segments spans residues 7–24 (VFLF…YLSG), 39–61 (FYAW…NYWI), 78–100 (WLLL…NFGV), 115–137 (FILT…ISYI), 150–172 (NLID…VLRF), 312–334 (FLTM…WGAW), 360–382 (AFTF…HVAA), 402–424 (AQLT…FFGL), and 461–483 (ILLL…FLYF). Residue H322 is part of the active site.

This sequence belongs to the membrane-bound acyltransferase family.

The protein localises to the cell inner membrane. The protein operates within glycan biosynthesis; alginate biosynthesis. In terms of biological role, together with AlgJ and AlgF, forms an inner membrane complex which probably interacts with the alginate polymerization-transport complex and adds acetyl groups at the O-2 and O-3 positions of mannuronate residues. Acetylation of alginate is important for the architecture of biofilms and increases the ability of alginate to act as a defense barrier. The chain is Probable alginate O-acetylase AlgI (algI) from Pseudomonas putida (strain ATCC 47054 / DSM 6125 / CFBP 8728 / NCIMB 11950 / KT2440).